The primary structure comprises 306 residues: Methionyl-tRNA formyltransferase (306 aa).

105–108 provides a ligand contact to (6S)-5,6,7,8-tetrahydrofolate; the sequence is SLLP.

Belongs to the Fmt family.

The enzyme catalyses L-methionyl-tRNA(fMet) + (6R)-10-formyltetrahydrofolate = N-formyl-L-methionyl-tRNA(fMet) + (6S)-5,6,7,8-tetrahydrofolate + H(+). Functionally, attaches a formyl group to the free amino group of methionyl-tRNA(fMet). The formyl group appears to play a dual role in the initiator identity of N-formylmethionyl-tRNA by promoting its recognition by IF2 and preventing the misappropriation of this tRNA by the elongation apparatus. This is Methionyl-tRNA formyltransferase from Rubrobacter xylanophilus (strain DSM 9941 / JCM 11954 / NBRC 16129 / PRD-1).